Consider the following 175-residue polypeptide: Translation initiation factor IF-3 (175 aa).

Belongs to the IF-3 family. In terms of assembly, monomer.

It localises to the cytoplasm. Functionally, IF-3 binds to the 30S ribosomal subunit and shifts the equilibrium between 70S ribosomes and their 50S and 30S subunits in favor of the free subunits, thus enhancing the availability of 30S subunits on which protein synthesis initiation begins. The polypeptide is Translation initiation factor IF-3 (Staphylococcus epidermidis (strain ATCC 35984 / DSM 28319 / BCRC 17069 / CCUG 31568 / BM 3577 / RP62A)).